Consider the following 350-residue polypeptide: Small ribosomal subunit biogenesis GTPase RsgA (350 aa).

The span at M1–N17 shows a compositional bias: polar residues. The disordered stretch occupies residues M1 to E27. A CP-type G domain is found at T104–F273. GTP contacts are provided by residues N160–D163 and G214–S222. 4 residues coordinate Zn(2+): C297, C302, H304, and C310.

Belongs to the TRAFAC class YlqF/YawG GTPase family. RsgA subfamily. Monomer. Associates with 30S ribosomal subunit, binds 16S rRNA. Zn(2+) is required as a cofactor.

It is found in the cytoplasm. One of several proteins that assist in the late maturation steps of the functional core of the 30S ribosomal subunit. Helps release RbfA from mature subunits. May play a role in the assembly of ribosomal proteins into the subunit. Circularly permuted GTPase that catalyzes slow GTP hydrolysis, GTPase activity is stimulated by the 30S ribosomal subunit. This chain is Small ribosomal subunit biogenesis GTPase RsgA, found in Salmonella agona (strain SL483).